We begin with the raw amino-acid sequence, 1011 residues long: Probable calcium-transporting ATPase (1011 aa).

At 1 to 65 (MLPENLPTDP…WKLVLAQFED (65 aa)) the chain is on the cytoplasmic side. A helical membrane pass occupies residues 66 to 84 (TLVRILLLAATVSFAMAVV). Over 85 to 90 (ENNAAD) the chain is Extracellular. A helical membrane pass occupies residues 91–110 (FVEPFIILLILILNATVGVW). The Cytoplasmic portion of the chain corresponds to 111–258 (QENRAEGAIE…QVKLDEFGVL (148 aa)). The chain crosses the membrane as a helical span at residues 259–278 (LSKVIGYICLVVFAVNLVRW). Topologically, residues 279–303 (YATHKPTKNETFFTRYIQPSVHCLK) are extracellular. A helical transmembrane segment spans residues 304-321 (VAVALAVAAIPEGLPAVV). The Cytoplasmic portion of the chain corresponds to 322 to 770 (TTCLALGTRR…RYLISSNIGE (449 aa)). The active-site 4-aspartylphosphate intermediate is the Asp-357. Lys-514 is an ATP binding site. Residues 771 to 794 (VVCILVTGLFGLPEALSPVQLLWV) traverse the membrane as a helical segment. Residues 795–835 (NLVTDGLPATALGFNAPDRDIMEQRPRRMEEPIVNGWLFMR) are Extracellular-facing. A helical membrane pass occupies residues 836–856 (YMVIGVYVGLATVGGFLWWFL). Residues 857–885 (RHGFSWHDLTTYTACSDMTNGTCLLLANP) are Cytoplasmic-facing. The helical transmembrane segment at 886–905 (QTARAIALSILVVVEMLNAL) threads the bilayer. The Extracellular segment spans residues 906-922 (NALSENASLIVSRPSSN). The chain crosses the membrane as a helical span at residues 923–942 (VWLLFAIFSSLSLHLIIMYV). Over 943–1011 (PFFAKLFNIV…MEKAQEKKKD (69 aa)) the chain is Cytoplasmic.

The protein belongs to the cation transport ATPase (P-type) (TC 3.A.3) family.

The protein localises to the flagellar pocket. The protein resides in the cell membrane. It catalyses the reaction Ca(2+)(in) + ATP + H2O = Ca(2+)(out) + ADP + phosphate + H(+). In terms of biological role, this magnesium-dependent enzyme catalyzes the hydrolysis of ATP coupled with the transport of the calcium. This is Probable calcium-transporting ATPase (TBA1) from Trypanosoma brucei brucei.